The following is a 151-amino-acid chain: Deoxyuridine 5'-triphosphate nucleotidohydrolase (151 aa).

Residues 70–72 (RSG), Asn83, 87–89 (LID), and Met97 each bind substrate.

It belongs to the dUTPase family. Mg(2+) is required as a cofactor.

It catalyses the reaction dUTP + H2O = dUMP + diphosphate + H(+). Its pathway is pyrimidine metabolism; dUMP biosynthesis; dUMP from dCTP (dUTP route): step 2/2. This enzyme is involved in nucleotide metabolism: it produces dUMP, the immediate precursor of thymidine nucleotides and it decreases the intracellular concentration of dUTP so that uracil cannot be incorporated into DNA. This chain is Deoxyuridine 5'-triphosphate nucleotidohydrolase, found in Actinobacillus pleuropneumoniae serotype 7 (strain AP76).